A 156-amino-acid chain; its full sequence is Small ribosomal subunit protein uS7 (156 aa).

The protein belongs to the universal ribosomal protein uS7 family. In terms of assembly, part of the 30S ribosomal subunit. Contacts proteins S9 and S11.

Functionally, one of the primary rRNA binding proteins, it binds directly to 16S rRNA where it nucleates assembly of the head domain of the 30S subunit. Is located at the subunit interface close to the decoding center, probably blocks exit of the E-site tRNA. This chain is Small ribosomal subunit protein uS7, found in Sodalis glossinidius (strain morsitans).